The primary structure comprises 160 residues: MSNRTSNTTVEPRGSEVENRENVLLLRRQSVPEHESNPQERTKATQKKKKKKPKVRWTEDVVDNEDMNKKKTKICCIFHPQRNFDDGTDSDHSHSDSDSSSDSSGDERGGHEGSSRGPDGGNDSKKIVDGVKKEPIPNAYEYQPVYKNESKLPPGINDER.

The segment covering methionine 1–valine 10 has biased composition (polar residues). Residues methionine 1–arginine 160 are disordered. Positions serine 30–lysine 43 are enriched in basic and acidic residues. Positions alanine 44 to valine 55 are enriched in basic residues. Composition is skewed to basic and acidic residues over residues arginine 82–serine 97, glycine 105–serine 114, and asparagine 122–proline 135.

Belongs to the YPI1 family.

It localises to the nucleus. Functionally, regulator of type 1 phosphatases which maintains protein phosphatase activity under strict control. This Scheffersomyces stipitis (strain ATCC 58785 / CBS 6054 / NBRC 10063 / NRRL Y-11545) (Yeast) protein is Type 1 phosphatases regulator YPI1 (YPI1).